Here is a 241-residue protein sequence, read N- to C-terminus: Ubiquinone biosynthesis O-methyltransferase (241 aa).

Residues arginine 46, glycine 66, aspartate 87, and methionine 131 each contribute to the S-adenosyl-L-methionine site.

It belongs to the methyltransferase superfamily. UbiG/COQ3 family.

It catalyses the reaction a 3-demethylubiquinol + S-adenosyl-L-methionine = a ubiquinol + S-adenosyl-L-homocysteine + H(+). It carries out the reaction a 3-(all-trans-polyprenyl)benzene-1,2-diol + S-adenosyl-L-methionine = a 2-methoxy-6-(all-trans-polyprenyl)phenol + S-adenosyl-L-homocysteine + H(+). It participates in cofactor biosynthesis; ubiquinone biosynthesis. O-methyltransferase that catalyzes the 2 O-methylation steps in the ubiquinone biosynthetic pathway. This is Ubiquinone biosynthesis O-methyltransferase from Bordetella avium (strain 197N).